We begin with the raw amino-acid sequence, 41 residues long: CTTGPCCRQCKLKPAGTTCWKTSLTSHYCTGKSCDCPLYPG.

4 cysteine pairs are disulfide-bonded: Cys1/Cys10, Cys6/Cys29, Cys7/Cys34, and Cys19/Cys36. The 41-residue stretch at 1–41 folds into the Disintegrin domain; that stretch reads CTTGPCCRQCKLKPAGTTCWKTSLTSHYCTGKSCDCPLYPG. Residues 21–23 carry the Cell attachment site; atypical (KTS) motif; that stretch reads KTS.

It belongs to the disintegrin family. Short disintegrin subfamily. In terms of assembly, monomer. In terms of tissue distribution, expressed by the venom gland.

Its subcellular location is the secreted. Functionally, is a potent and selective inhibitor of alpha-1/beta-1 (ITGA1/ITGB1) integrin. It blocks the adhesion of alpha-1/beta-1-expressing K562 cells to immobilized collagens IV and I with IC(50) of 2 and 0.5 nM, respectively. Potently inhibits angiogenesis in chicken and in mouse model and reduces tumor development by half. Is 25-fold less potent than viperistatin. The sequence is that of Disintegrin obtustatin from Macrovipera lebetina obtusa (Levant blunt-nosed viper).